Here is a 206-residue protein sequence, read N- to C-terminus: Large ribosomal subunit protein uL4 (206 aa).

The segment at 62-85 (KPWRQKGTGRARQGSTRSPQFRGG) is disordered.

The protein belongs to the universal ribosomal protein uL4 family. Part of the 50S ribosomal subunit.

Functionally, one of the primary rRNA binding proteins, this protein initially binds near the 5'-end of the 23S rRNA. It is important during the early stages of 50S assembly. It makes multiple contacts with different domains of the 23S rRNA in the assembled 50S subunit and ribosome. Its function is as follows. Forms part of the polypeptide exit tunnel. The protein is Large ribosomal subunit protein uL4 of Rhodospirillum centenum (strain ATCC 51521 / SW).